Consider the following 215-residue polypeptide: 3,4-dihydroxy-2-butanone 4-phosphate synthase (215 aa).

Residues 37-38 (RE), Asp-42, 150-154 (RRGHT), and Glu-175 each bind D-ribulose 5-phosphate. Glu-38 serves as a coordination point for Mg(2+). Position 153 (His-153) interacts with Mg(2+).

The protein belongs to the DHBP synthase family. In terms of assembly, homodimer. The cofactor is Mg(2+). Requires Mn(2+) as cofactor.

The catalysed reaction is D-ribulose 5-phosphate = (2S)-2-hydroxy-3-oxobutyl phosphate + formate + H(+). Its pathway is cofactor biosynthesis; riboflavin biosynthesis; 2-hydroxy-3-oxobutyl phosphate from D-ribulose 5-phosphate: step 1/1. Catalyzes the conversion of D-ribulose 5-phosphate to formate and 3,4-dihydroxy-2-butanone 4-phosphate. This Desulfatibacillum aliphaticivorans protein is 3,4-dihydroxy-2-butanone 4-phosphate synthase.